We begin with the raw amino-acid sequence, 352 residues long: Light dependent period A (352 aa).

4Fe-4S ferredoxin-type domains follow at residues 88–119 (RRAW…STGV) and 121–144 (RDRC…AQAW). Positions 97, 101, 105, 109, 124, 127, 130, and 134 each coordinate [4Fe-4S] cluster.

As to quaternary structure, interacts with KaiA, CikA and SasA; the complexes do not follow circadian rhythms. [4Fe-4S] cluster serves as cofactor.

In terms of biological role, functions in an input pathway to the Kai circadian clock. Probably senses the metabolic state of the cell via plastoquinone levels and informs the clock to modulate the photoperiod length. Deletion decreases the ability of the bacteria to modulate the circadian period in response to altered light regimes. Mild overexpression increases the photoperiod. Rapidly degraded in the presence of the quinone analog DBMIB (2,5-dibromo-3-methyl-6-isopropyl-p-benzoquinone), an artifical electron acceptor for photosystem II that reduces the plastoquinone pool. Partially resonsible for sensitivity of CikA to DBMIB, influences the levels of KaiA. The polypeptide is Light dependent period A (Synechococcus elongatus (strain ATCC 33912 / PCC 7942 / FACHB-805) (Anacystis nidulans R2)).